The sequence spans 216 residues: Large ribosomal subunit protein uL24m (216 aa).

The transit peptide at 1–9 (MRLSALLAL) directs the protein to the mitochondrion. Position 24 is a phosphoserine (Ser-24). In terms of domain architecture, KOW spans 56 to 89 (LFCGDMVEILEGKDAGKQGKVVQVVRQRNWVVLE).

The protein belongs to the universal ribosomal protein uL24 family. Component of the mitochondrial ribosome large subunit (39S) which comprises a 16S rRNA and about 50 distinct proteins.

The protein localises to the mitochondrion. The chain is Large ribosomal subunit protein uL24m (Mrpl24) from Mus musculus (Mouse).